The following is a 138-amino-acid chain: Putative phosphatidylinositol 3,4,5-trisphosphate 3-phosphatase TPTE2P1 (138 aa).

Residues 1–75 (MPAAFPCVFP…FAVEILFGMV (75 aa)) form the C2 tensin-type domain.

This is Putative phosphatidylinositol 3,4,5-trisphosphate 3-phosphatase TPTE2P1 (TPTE2P1) from Homo sapiens (Human).